A 379-amino-acid polypeptide reads, in one-letter code: Dual-specificity RNA methyltransferase RlmN (379 aa).

The Proton acceptor role is filled by Glu90. In terms of domain architecture, Radical SAM core spans 96-348; it reads EPNRGTLCVS…TTVRKTRGDD (253 aa). Cys103 and Cys353 are disulfide-bonded. [4Fe-4S] cluster-binding residues include Cys110, Cys114, and Cys117. Residues 179 to 180, Ser211, 233 to 235, and Asn310 contribute to the S-adenosyl-L-methionine site; these read GE and SLH. Cys353 (S-methylcysteine intermediate) is an active-site residue.

The protein belongs to the radical SAM superfamily. RlmN family. [4Fe-4S] cluster serves as cofactor.

The protein resides in the cytoplasm. It catalyses the reaction adenosine(2503) in 23S rRNA + 2 reduced [2Fe-2S]-[ferredoxin] + 2 S-adenosyl-L-methionine = 2-methyladenosine(2503) in 23S rRNA + 5'-deoxyadenosine + L-methionine + 2 oxidized [2Fe-2S]-[ferredoxin] + S-adenosyl-L-homocysteine. It carries out the reaction adenosine(37) in tRNA + 2 reduced [2Fe-2S]-[ferredoxin] + 2 S-adenosyl-L-methionine = 2-methyladenosine(37) in tRNA + 5'-deoxyadenosine + L-methionine + 2 oxidized [2Fe-2S]-[ferredoxin] + S-adenosyl-L-homocysteine. Its function is as follows. Specifically methylates position 2 of adenine 2503 in 23S rRNA and position 2 of adenine 37 in tRNAs. m2A2503 modification seems to play a crucial role in the proofreading step occurring at the peptidyl transferase center and thus would serve to optimize ribosomal fidelity. The protein is Dual-specificity RNA methyltransferase RlmN of Nitrosomonas eutropha (strain DSM 101675 / C91 / Nm57).